We begin with the raw amino-acid sequence, 324 residues long: HPr kinase/phosphorylase (324 aa).

Catalysis depends on residues histidine 146 and lysine 167. 161–168 (GDSGLGKS) lines the ATP pocket. Serine 168 lines the Mg(2+) pocket. The active-site Proton acceptor; for phosphorylation activity. Proton donor; for dephosphorylation activity is aspartate 185. The segment at 209 to 218 (LEVRGLGLLD) is important for the catalytic mechanism of both phosphorylation and dephosphorylation. Glutamate 210 is a binding site for Mg(2+). Residue arginine 250 is part of the active site. The tract at residues 271 to 276 (QVAAGR) is important for the catalytic mechanism of dephosphorylation.

This sequence belongs to the HPrK/P family. Homohexamer. Requires Mg(2+) as cofactor.

The enzyme catalyses [HPr protein]-L-serine + ATP = [HPr protein]-O-phospho-L-serine + ADP + H(+). It catalyses the reaction [HPr protein]-O-phospho-L-serine + phosphate + H(+) = [HPr protein]-L-serine + diphosphate. Its function is as follows. Catalyzes the ATP- as well as the pyrophosphate-dependent phosphorylation of a specific serine residue in HPr, a phosphocarrier protein of the phosphoenolpyruvate-dependent sugar phosphotransferase system (PTS). HprK/P also catalyzes the pyrophosphate-producing, inorganic phosphate-dependent dephosphorylation (phosphorolysis) of seryl-phosphorylated HPr (P-Ser-HPr). The protein is HPr kinase/phosphorylase of Ralstonia nicotianae (strain ATCC BAA-1114 / GMI1000) (Ralstonia solanacearum).